A 354-amino-acid polypeptide reads, in one-letter code: MAESPTEEAATAGAGAAGPGASSVAGVVGVSGSGGGFGPPFLPDVWAAAAAAGGAGGPGSGLAPLPGLPPSAAAHGAALLSHWDPTLSSDWDGERTAPQCLLRIKRDIMSIYKEPPPGMFVVPDTVDMTKIHALITGPFDTPYEGGFFLFVFRCPPDYPIHPPRVKLMTTGNNTVRFNPNFYRNGKVCLSILGTWTGPAWSPAQSISSVLISIQSLMTENPYHNEPGFEQERHPGDSKNYNECIRHETIRVAVCDMMEGKCPCPEPLRGVMEKSFLEYYDFYEVACKDRLHLQGQTMQDPFGEKRGHFDYQSLLMRLGLIRQKVLERLHNENAEMDSDSSSSGTETDLHGSLRV.

Residues 1–21 (MAESPTEEAATAGAGAAGPGA) are disordered. The UBC core domain maps to 99–253 (QCLLRIKRDI…IRHETIRVAV (155 aa)). Cys-188 acts as the Glycyl thioester intermediate in catalysis. The disordered stretch occupies residues 332–354 (NAEMDSDSSSSGTETDLHGSLRV). Ser-337 bears the Phosphoserine mark.

It belongs to the ubiquitin-conjugating enzyme family. Widely expressed. Highly in placenta, pancreas, spleen and testis.

It is found in the cytoplasm. The protein resides in the nucleus. It catalyses the reaction S-ubiquitinyl-[E1 ubiquitin-activating enzyme]-L-cysteine + [E2 ubiquitin-conjugating enzyme]-L-cysteine = [E1 ubiquitin-activating enzyme]-L-cysteine + S-ubiquitinyl-[E2 ubiquitin-conjugating enzyme]-L-cysteine.. It functions in the pathway protein modification; protein ubiquitination. Functionally, catalyzes the covalent attachment of ubiquitin to other proteins. Specific substrate for UBA6, not charged with ubiquitin by UBE1. May be involved in apoptosis regulation. The sequence is that of Ubiquitin-conjugating enzyme E2 Z (UBE2Z) from Homo sapiens (Human).